A 60-amino-acid chain; its full sequence is LKCYKLVPPFWKTCPEGKNLCYKMYMVSTLTVPVKRGCIDVCPKNSALVKYVCCNTDKCN.

4 cysteine pairs are disulfide-bonded: cysteine 3–cysteine 21, cysteine 14–cysteine 38, cysteine 42–cysteine 53, and cysteine 54–cysteine 59.

The protein belongs to the three-finger toxin family. Short-chain subfamily. Type IA cytotoxin sub-subfamily. In terms of assembly, monomer in solution; Homodimer and oligomer in the presence of negatively charged lipids forming a pore with a size ranging between 20 and 30 Angstroms. In terms of tissue distribution, expressed by the venom gland.

It is found in the secreted. It localises to the target cell membrane. In terms of biological role, shows cytolytic activity on many different cells by forming pore in lipid membranes. In vivo, increases heart rate or kills the animal by cardiac arrest. In addition, it binds to heparin with high affinity, interacts with Kv channel-interacting protein 1 (KCNIP1) in a calcium-independent manner, and binds to integrin alpha-V/beta-3 (ITGAV/ITGB3) with moderate affinity. In Naja annulifera (Banded Egyptian cobra), this protein is Cytotoxin 3.